We begin with the raw amino-acid sequence, 383 residues long: Mating-type protein MAT-1 (383 aa).

The segment at residues 60–117 (KARKALNAFVGFRCYYVTIPMFKSWPMKKLSNLIGLLWEADPNKSLWSLMAKAWSTIR) is a DNA-binding region (alpha box).

It belongs to the MATALPHA1 family.

Its subcellular location is the nucleus. Its function is as follows. Mating type proteins are sequence specific DNA-binding proteins that act as master switches in fungal differentiation by controlling gene expression in a cell type-specific fashion. Transcriptional activator that induces the transcription of alpha-specific genes. This Cochliobolus heterostrophus (Southern corn leaf blight fungus) protein is Mating-type protein MAT-1 (MAT1).